A 60-amino-acid chain; its full sequence is Large ribosomal subunit protein bL32 (60 aa).

The segment covering 1–16 has biased composition (basic residues); it reads MAVPRRKTSPSRRGMR. Positions 1 to 60 are disordered; the sequence is MAVPRRKTSPSRRGMRRSADAIKKPTYAEDKDSGELRRPHHLDLKTGMYKGRQVLIKKES. Positions 17–44 are enriched in basic and acidic residues; sequence RSADAIKKPTYAEDKDSGELRRPHHLDL.

It belongs to the bacterial ribosomal protein bL32 family.

This Rhodopseudomonas palustris (strain BisA53) protein is Large ribosomal subunit protein bL32.